The sequence spans 194 residues: Segregation and condensation protein B (194 aa).

It belongs to the ScpB family. As to quaternary structure, homodimer. Homodimerization may be required to stabilize the binding of ScpA to the Smc head domains. Component of a cohesin-like complex composed of ScpA, ScpB and the Smc homodimer, in which ScpA and ScpB bind to the head domain of Smc. The presence of the three proteins is required for the association of the complex with DNA.

The protein localises to the cytoplasm. Participates in chromosomal partition during cell division. May act via the formation of a condensin-like complex containing Smc and ScpA that pull DNA away from mid-cell into both cell halves. This is Segregation and condensation protein B from Streptococcus agalactiae serotype Ia (strain ATCC 27591 / A909 / CDC SS700).